A 289-amino-acid polypeptide reads, in one-letter code: 2-hydroxy-6-oxononadienedioate/2-hydroxy-6-oxononatrienedioate hydrolase (289 aa).

The active-site Proton acceptor is the His269.

The protein belongs to the AB hydrolase superfamily. MhpC family. As to quaternary structure, homodimer.

The catalysed reaction is (2Z,4E)-2-hydroxy-6-oxonona-2,4-dienedioate + H2O = (2Z)-2-hydroxypenta-2,4-dienoate + succinate + H(+). The enzyme catalyses (2Z,4E,7E)-2-hydroxy-6-oxonona-2,4,7-trienedioate + H2O = (2Z)-2-hydroxypenta-2,4-dienoate + fumarate + H(+). It functions in the pathway aromatic compound metabolism; 3-phenylpropanoate degradation. Functionally, catalyzes the cleavage of the C5-C6 bond of 2-hydroxy-6-oxononadienedioate and 2-hydroxy-6-oxononatrienedioate, a dienol ring fission product of the bacterial meta-cleavage pathway for degradation of phenylpropionic acid. In Cupriavidus pinatubonensis (strain JMP 134 / LMG 1197) (Cupriavidus necator (strain JMP 134)), this protein is 2-hydroxy-6-oxononadienedioate/2-hydroxy-6-oxononatrienedioate hydrolase.